The sequence spans 171 residues: 3-hydroxydecanoyl-[acyl-carrier-protein] dehydratase (171 aa).

His-70 is a catalytic residue.

It belongs to the thioester dehydratase family. FabA subfamily. In terms of assembly, homodimer.

It localises to the cytoplasm. It catalyses the reaction a (3R)-hydroxyacyl-[ACP] = a (2E)-enoyl-[ACP] + H2O. The catalysed reaction is (3R)-hydroxydecanoyl-[ACP] = (2E)-decenoyl-[ACP] + H2O. The enzyme catalyses (2E)-decenoyl-[ACP] = (3Z)-decenoyl-[ACP]. The protein operates within lipid metabolism; fatty acid biosynthesis. In terms of biological role, necessary for the introduction of cis unsaturation into fatty acids. Catalyzes the dehydration of (3R)-3-hydroxydecanoyl-ACP to E-(2)-decenoyl-ACP and then its isomerization to Z-(3)-decenoyl-ACP. Can catalyze the dehydratase reaction for beta-hydroxyacyl-ACPs with saturated chain lengths up to 16:0, being most active on intermediate chain length. This Photobacterium profundum (strain SS9) protein is 3-hydroxydecanoyl-[acyl-carrier-protein] dehydratase.